The chain runs to 283 residues: E3 ubiquitin-protein ligase SGR9, amyloplastic (283 aa).

Residues 1 to 32 constitute an amyloplast transit peptide; it reads MEDENTTIIMASLSALSPSHLTNLTHSILSIS. An RING-type; atypical zinc finger spans residues 214–255; that stretch reads CVICKEEMSEGRDVCEMPCQHFFHWKCILPWLSKKNTCPFCR.

In terms of processing, auto-ubiquitinated as part of the enzymatic reaction. Expressed in seedlings, hypocotyls, roots and stems. Present especially in hypocotyl and inflorescence endodermis, as well as in root cap columella, tissues that act as statocytes.

Its subcellular location is the plastid. The protein resides in the amyloplast. It carries out the reaction S-ubiquitinyl-[E2 ubiquitin-conjugating enzyme]-L-cysteine + [acceptor protein]-L-lysine = [E2 ubiquitin-conjugating enzyme]-L-cysteine + N(6)-ubiquitinyl-[acceptor protein]-L-lysine.. Its pathway is protein modification; protein ubiquitination. Functionally, E3 ubiquitin-protein ligase which accepts ubiquitin from an E2 ubiquitin-conjugating enzyme in the form of a thioester and then directly transfers the ubiquitin to targeted substrates. Modulates amyloplast dynamics and sedimentation in statocytes during inflorescence, hypocotyl and root gravitropism, probably by regulating amyloplast interaction with actin filaments (AFs) in endodermal cells. This chain is E3 ubiquitin-protein ligase SGR9, amyloplastic (SGR9), found in Arabidopsis thaliana (Mouse-ear cress).